The primary structure comprises 172 residues: Adenine phosphoribosyltransferase (172 aa).

Belongs to the purine/pyrimidine phosphoribosyltransferase family. In terms of assembly, homodimer.

Its subcellular location is the cytoplasm. The enzyme catalyses AMP + diphosphate = 5-phospho-alpha-D-ribose 1-diphosphate + adenine. It functions in the pathway purine metabolism; AMP biosynthesis via salvage pathway; AMP from adenine: step 1/1. Its function is as follows. Catalyzes a salvage reaction resulting in the formation of AMP, that is energically less costly than de novo synthesis. The sequence is that of Adenine phosphoribosyltransferase from Clostridium novyi (strain NT).